A 319-amino-acid chain; its full sequence is Cobalamin biosynthesis protein CbiB (319 aa).

5 helical membrane passes run 56–76 (VMWI…LALA), 82–102 (WLGW…RSLA), 153–173 (VDGI…LAMA), 204–224 (VANY…AGLC), and 296–316 (LMWG…CWLS).

The protein belongs to the CobD/CbiB family.

The protein localises to the cell membrane. It participates in cofactor biosynthesis; adenosylcobalamin biosynthesis. Converts cobyric acid to cobinamide by the addition of aminopropanol on the F carboxylic group. However, the true cosubstrate could be (R)-1-amino-2-propanol O-2-phosphate, leading to cobinamide phosphate. The protein is Cobalamin biosynthesis protein CbiB of Salmonella arizonae (strain ATCC BAA-731 / CDC346-86 / RSK2980).